A 398-amino-acid chain; its full sequence is S-adenosylmethionine synthase (398 aa).

His16 provides a ligand contact to ATP. Asp18 contacts Mg(2+). Glu51 contacts K(+). Positions 64 and 108 each coordinate L-methionine. The flexible loop stretch occupies residues 108-118 (QSADIAQGVDA). Residues 176-178 (DSK), 242-243 (KF), Asp251, 257-258 (RK), Ala274, and Lys278 each bind ATP. Asp251 is a binding site for L-methionine. Lys282 serves as a coordination point for L-methionine.

This sequence belongs to the AdoMet synthase family. As to quaternary structure, homotetramer; dimer of dimers. It depends on Mg(2+) as a cofactor. K(+) is required as a cofactor.

The protein localises to the cytoplasm. The enzyme catalyses L-methionine + ATP + H2O = S-adenosyl-L-methionine + phosphate + diphosphate. It participates in amino-acid biosynthesis; S-adenosyl-L-methionine biosynthesis; S-adenosyl-L-methionine from L-methionine: step 1/1. Catalyzes the formation of S-adenosylmethionine (AdoMet) from methionine and ATP. The overall synthetic reaction is composed of two sequential steps, AdoMet formation and the subsequent tripolyphosphate hydrolysis which occurs prior to release of AdoMet from the enzyme. The protein is S-adenosylmethionine synthase of Rhodopseudomonas palustris (strain HaA2).